Consider the following 955-residue polypeptide: MPFALGQRWISDTETDLGLGTVVAVEGRMVTLLFPATGENRMYAKEEAPVTRVSFNVGDQIATHEDWTMTVEEVQEKNGLLIYVGVRTDNDEPVALKEVFLSNFIKFNKPQDRLFAGQIDRMSRFTLRYEALINQHKRRLNPTRGLAGGRVSLIPHQLYIAHEVGHRYAPRVLLADEVGLGKTIEAGMIIHQQLLSGRAHRVLILLPETLQHQWLVEMLRRFNLHFSLFDEERCIEAFADAENPFETEQLVICSLDFLRKKRRRFEQVLEAEWDLLVVDEAHHLEWSIDAPSRAYEMVEALAEQVPGVLLLTATPDQLGHQSHFARLRLLDPERFYDYEAFLAEEQAYGKVASAAQELLDGETLSDEARQILASQLEGLDMSDAAARQQAVAKLLDQHGTGRVLFRNSRANIQGFPERHLNVYPMPLPEQYKTAIKVMGMMGGNGGDLQTRALRYLYPEKIFQQFEGENATWTQFDPRVDWLLELLLSARQQKVLVICSEAATAIALEEALRTREGIRGTVFHEGMSILERDKASAYFAQEDGGAQVLLCSEIGSEGRNFQFASHLVLFDLPLNPDLLEQRIGRLDRIGQQNTVEIHVPYLEGTAQRALQLWYHDGLDAFEQTCPTARPVFEAVRDELFELLAANTGDQVTLDALLIKTRELHEPLKARLEQGRDRLLEIHSSGGAAAQLLVDKLAAEDDDTGMVSFALKMFDEIGVNQDDRGENALVLTPGDHMLVSSFPGLPQDGMTITFDRPTALSRDDMALLSWDHPMMRGGIDLILGSEIGATSVALLKNKALPIGSILLELIFVAESAAHPQLYRFMPPTPIRLLMDKNGQNLGEKVAFDAFNRQLTPVNRHLGSKLVTASQPVIHGLIGKGQVIAEELKAGIVDKARTRMAQTLQQDLDRLEALKAVNPNVRDSELDYLRNLQAELHHLIDQTQLKLDAIRFIVVTHN.

The 171-residue stretch at 163-333 (EVGHRYAPRV…FARLRLLDPE (171 aa)) folds into the Helicase ATP-binding domain. 176–183 (DEVGLGKT) serves as a coordination point for ATP. The DEAH box motif lies at 279-282 (DEAH). The Helicase C-terminal domain occupies 478–642 (RVDWLLELLL…AVRDELFELL (165 aa)).

The protein belongs to the SNF2/RAD54 helicase family. RapA subfamily. Interacts with the RNAP. Has a higher affinity for the core RNAP than for the holoenzyme. Its ATPase activity is stimulated by binding to RNAP.

Its function is as follows. Transcription regulator that activates transcription by stimulating RNA polymerase (RNAP) recycling in case of stress conditions such as supercoiled DNA or high salt concentrations. Probably acts by releasing the RNAP, when it is trapped or immobilized on tightly supercoiled DNA. Does not activate transcription on linear DNA. Probably not involved in DNA repair. The protein is RNA polymerase-associated protein RapA of Aeromonas salmonicida (strain A449).